A 425-amino-acid chain; its full sequence is Bifunctional phosphoribosylaminoimidazole carboxylase/phosphoribosylaminoimidazole succinocarboxamide synthetase (425 aa).

Residue A2 is modified to N-acetylalanine. Positions 2–260 are SAICAR synthetase domain; sequence ATAVVVNIGK…WVADRVELLL (259 aa). Position 22 is a phosphotyrosine (Y22). N6-acetyllysine is present on K36. S107 carries the phosphoserine modification. T238 bears the Phosphothreonine mark. Residue K247 is modified to N6-acetyllysine. The interval 261-266 is linker; sequence KSDSQC. Residues 267–425 form an AIR carboxylase domain region; that stretch reads RVVVLMGSTS…ADKKVRQCNL (159 aa). The residue at position 274 (S274) is a Phosphoserine. Position 332 (S332) interacts with CO2.

The protein in the N-terminal section; belongs to the SAICAR synthetase family. It in the C-terminal section; belongs to the AIR carboxylase family. Class II subfamily. As to quaternary structure, homooctamer.

It carries out the reaction 5-amino-1-(5-phospho-D-ribosyl)imidazole-4-carboxylate + L-aspartate + ATP = (2S)-2-[5-amino-1-(5-phospho-beta-D-ribosyl)imidazole-4-carboxamido]succinate + ADP + phosphate + 2 H(+). The enzyme catalyses 5-amino-1-(5-phospho-D-ribosyl)imidazole-4-carboxylate + H(+) = 5-amino-1-(5-phospho-beta-D-ribosyl)imidazole + CO2. Its pathway is purine metabolism; IMP biosynthesis via de novo pathway; 5-amino-1-(5-phospho-D-ribosyl)imidazole-4-carboxamide from 5-amino-1-(5-phospho-D-ribosyl)imidazole-4-carboxylate: step 1/2. It participates in purine metabolism; IMP biosynthesis via de novo pathway; 5-amino-1-(5-phospho-D-ribosyl)imidazole-4-carboxylate from 5-amino-1-(5-phospho-D-ribosyl)imidazole (carboxylase route): step 1/1. Its function is as follows. Bifunctional phosphoribosylaminoimidazole carboxylase and phosphoribosylaminoimidazole succinocarboxamide synthetase catalyzing two reactions of the de novo purine biosynthetic pathway. The chain is Bifunctional phosphoribosylaminoimidazole carboxylase/phosphoribosylaminoimidazole succinocarboxamide synthetase from Mus musculus (Mouse).